A 711-amino-acid chain; its full sequence is K(+)-insensitive pyrophosphate-energized proton pump (711 aa).

5 consecutive transmembrane segments (helical) span residues 7-27, 58-78, 85-105, 145-165, and 179-199; these read LIYGVIVIAALVIIGLIKFIF, IASLALIVAVIIVVANYYGHL, ALSFALHVGFAFITGAFCSAL, LAVTALSLFGVATLFLAYGGL, and IVGFGFGASFVALFAQLGGGI. Lysine 202 lines the substrate pocket. Mg(2+)-binding residues include aspartate 205, aspartate 209, and aspartate 235. A run of 6 helical transmembrane segments spans residues 251-271, 274-294, 311-331, 343-363, 403-423, and 431-451; these read TAAENIGAMILGVGLYPIFGW, ILFPLVARAIGIIASIIGIFF, GYFVTTVVNLIALFFAVKVML, YLLLYGAVVTGVILSYIFVFL, LPVIFISAAIYIAYKLGEMAI, and LYGTAIATMGMLSTTAYILAM. Aspartate 459 serves as a coordination point for Mg(2+). A run of 4 helical transmembrane segments spans residues 495-515, 535-555, 602-622, and 624-644; these read YAIGSAALATFLLFSAYLDEV, EVFIGAFIGAMIVYLFSSTAI, EMVIPGLIVVVTPILVGVILG, and EAAAAFLMIGTISGVILALYL. Positions 652, 678, and 682 each coordinate Ca(2+). Lysine 685 lines the substrate pocket. The helical transmembrane segment at 690–710 threads the bilayer; that stretch reads PSLHVLIKLISTITLVFVALF.

This sequence belongs to the H(+)-translocating pyrophosphatase (TC 3.A.10) family. K(+)-insensitive subfamily. Homodimer. Mg(2+) is required as a cofactor.

It localises to the cell membrane. The enzyme catalyses diphosphate + H2O + H(+)(in) = 2 phosphate + 2 H(+)(out). Its function is as follows. Proton pump that utilizes the energy of pyrophosphate hydrolysis as the driving force for proton movement across the membrane. Generates a proton motive force. This Caldanaerobacter subterraneus subsp. tengcongensis (strain DSM 15242 / JCM 11007 / NBRC 100824 / MB4) (Thermoanaerobacter tengcongensis) protein is K(+)-insensitive pyrophosphate-energized proton pump.